Consider the following 577-residue polypeptide: Putative laccase-1 (577 aa).

The N-terminal stretch at 1-28 (MGTAKIPALLWFLLAGLVLALAVNPAHG) is a signal peptide. 2 consecutive Plastocyanin-like domains span residues 37–153 (FITE…PKRG) and 163–316 (KEIP…YTDS). 2 N-linked (GlcNAc...) asparagine glycosylation sites follow: N42 and N83. Residues H87 and H89 each coordinate Cu cation. N-linked (GlcNAc...) asparagine glycosylation occurs at N115. Cu cation contacts are provided by H132 and H134. N-linked (GlcNAc...) asparagine glycans are attached at residues N276, N304, N382, and N402. In terms of domain architecture, Plastocyanin-like 3 spans 442–561 (DINGGGPLLT…DTMFIVKDGK (120 aa)). 8 residues coordinate Cu cation: H478, H481, H483, H540, C541, H542, H546, and M551.

This sequence belongs to the multicopper oxidase family. It depends on Cu cation as a cofactor.

It localises to the secreted. The protein resides in the extracellular space. It is found in the apoplast. It catalyses the reaction 4 hydroquinone + O2 = 4 benzosemiquinone + 2 H2O. Its function is as follows. Lignin degradation and detoxification of lignin-derived products. This Oryza sativa subsp. japonica (Rice) protein is Putative laccase-1 (LAC1).